Consider the following 322-residue polypeptide: Tubulin alpha-4 chain (322 aa).

GTP contacts are provided by serine 15, glycine 19, threonine 20, threonine 54, asparagine 81, and asparagine 103. Glutamate 129 is an active-site residue.

Belongs to the tubulin family. In terms of assembly, dimer of alpha and beta chains. A typical microtubule is a hollow water-filled tube with an outer diameter of 25 nm and an inner diameter of 15 nM. Alpha-beta heterodimers associate head-to-tail to form protofilaments running lengthwise along the microtubule wall with the beta-tubulin subunit facing the microtubule plus end conferring a structural polarity. Microtubules usually have 13 protofilaments but different protofilament numbers can be found in some organisms and specialized cells. Mg(2+) serves as cofactor. Some glutamate residues at the C-terminus are polyglycylated, resulting in polyglycine chains on the gamma-carboxyl group. Glycylation is mainly limited to tubulin incorporated into axonemes (cilia and flagella) whereas glutamylation is prevalent in neuronal cells, centrioles, axonemes, and the mitotic spindle. Both modifications can coexist on the same protein on adjacent residues, and lowering polyglycylation levels increases polyglutamylation, and reciprocally. The precise function of polyglycylation is still unclear. In terms of processing, some glutamate residues at the C-terminus are polyglutamylated, resulting in polyglutamate chains on the gamma-carboxyl group. Polyglutamylation plays a key role in microtubule severing by spastin (SPAST). SPAST preferentially recognizes and acts on microtubules decorated with short polyglutamate tails: severing activity by SPAST increases as the number of glutamates per tubulin rises from one to eight, but decreases beyond this glutamylation threshold.

The protein localises to the cytoplasm. The protein resides in the cytoskeleton. It carries out the reaction GTP + H2O = GDP + phosphate + H(+). Functionally, tubulin is the major constituent of microtubules, a cylinder consisting of laterally associated linear protofilaments composed of alpha- and beta-tubulin heterodimers. Microtubules grow by the addition of GTP-tubulin dimers to the microtubule end, where a stabilizing cap forms. Below the cap, tubulin dimers are in GDP-bound state, owing to GTPase activity of alpha-tubulin. This Gallus gallus (Chicken) protein is Tubulin alpha-4 chain.